Reading from the N-terminus, the 384-residue chain is MVIIDSLSFYRPFWICMRLLVPTFFKDSSRPVQLYVVLLHILVTLWFPLHLLLHLLLLPSTAEFFKNLTMSLTCVACSLKHVAHLYHLPQIVEIESLIEQLDTFIASEQEHRYYRDHVHCHARRFTRCLYISFGMIYALFLFGVFVQVISGNWELLYPAYFPFDLESNRFLGAVALGYQVFSMLVEGFQGLGNDTYTPLTLCLLAGHVHLWSIRMGQLGYFDDETVVNHQRLLDYIEQHKLLVRFHNLVSRTISEVQLVQLGGCGATLCIIVSYMLFFVGDTISLVYYLVFFGVVCVQLFPSCYFASEVAEELERLPYAIFSSRWYDQSRDHRFDLLIFTQLTLGNRGWIIKAGGLIELNLNAFFATLKMAYSLFAVVVRAKGI.

Topologically, residues 1–35 are cytoplasmic; sequence MVIIDSLSFYRPFWICMRLLVPTFFKDSSRPVQLY. The chain crosses the membrane as a helical span at residues 36-56; the sequence is VVLLHILVTLWFPLHLLLHLL. At 57–63 the chain is on the extracellular side; the sequence is LLPSTAE. The helical transmembrane segment at 64–84 threads the bilayer; the sequence is FFKNLTMSLTCVACSLKHVAH. Residues 85–128 are Cytoplasmic-facing; that stretch reads LYHLPQIVEIESLIEQLDTFIASEQEHRYYRDHVHCHARRFTRC. A helical transmembrane segment spans residues 129–149; it reads LYISFGMIYALFLFGVFVQVI. Topologically, residues 150 to 169 are extracellular; the sequence is SGNWELLYPAYFPFDLESNR. The helical transmembrane segment at 170–190 threads the bilayer; it reads FLGAVALGYQVFSMLVEGFQG. At 191 to 251 the chain is on the cytoplasmic side; sequence LGNDTYTPLT…LVRFHNLVSR (61 aa). The helical transmembrane segment at 252–272 threads the bilayer; sequence TISEVQLVQLGGCGATLCIIV. Over 273–274 the chain is Extracellular; that stretch reads SY. The chain crosses the membrane as a helical span at residues 275–295; sequence MLFFVGDTISLVYYLVFFGVV. Residues 296–358 lie on the Cytoplasmic side of the membrane; the sequence is CVQLFPSCYF…WIIKAGGLIE (63 aa). A helical membrane pass occupies residues 359–379; that stretch reads LNLNAFFATLKMAYSLFAVVV. Residues 380-384 lie on the Extracellular side of the membrane; sequence RAKGI.

Belongs to the insect chemoreceptor superfamily. Heteromeric odorant receptor channel (TC 1.A.69) family. Or2a subfamily. In terms of assembly, interacts with Orco. Complexes exist early in the endomembrane system in olfactory sensory neurons (OSNs), coupling these complexes to the conserved ciliary trafficking pathway. Expressed in the antenna and in a subset of 18 olfactory receptor neurons in the maxillary palp.

It is found in the cell membrane. Its function is as follows. Odorant receptor which mediates acceptance or avoidance behavior, depending on its substrates. The odorant receptor repertoire encodes a large collection of odor stimuli that vary widely in identity, intensity, and duration. May form a complex with Orco to form odorant-sensing units, providing sensitive and prolonged odorant signaling and calcium permeability. The sequence is that of Odorant receptor 33c (Or33c) from Drosophila melanogaster (Fruit fly).